The following is a 153-amino-acid chain: Superoxide dismutase [Cu-Zn] (153 aa).

3 residues coordinate Cu cation: His-45, His-47, and His-62. A disulfide bond links Cys-56 and Cys-145. 4 residues coordinate Zn(2+): His-62, His-70, His-79, and Asp-82. Residue His-119 participates in Cu cation binding.

This sequence belongs to the Cu-Zn superoxide dismutase family. Homodimer. Requires Cu cation as cofactor. Zn(2+) is required as a cofactor.

The protein resides in the cytoplasm. The enzyme catalyses 2 superoxide + 2 H(+) = H2O2 + O2. Its function is as follows. Destroys radicals which are normally produced within the cells and which are toxic to biological systems. The chain is Superoxide dismutase [Cu-Zn] from Drosophila erecta (Fruit fly).